Consider the following 231-residue polypeptide: Large ribosomal subunit protein uL1 (231 aa).

The protein belongs to the universal ribosomal protein uL1 family. In terms of assembly, part of the 50S ribosomal subunit.

Its function is as follows. Binds directly to 23S rRNA. The L1 stalk is quite mobile in the ribosome, and is involved in E site tRNA release. Functionally, protein L1 is also a translational repressor protein, it controls the translation of the L11 operon by binding to its mRNA. This is Large ribosomal subunit protein uL1 from Ruthia magnifica subsp. Calyptogena magnifica.